The following is a 210-amino-acid chain: Nucleoside triphosphate pyrophosphatase (210 aa).

Catalysis depends on aspartate 80, which acts as the Proton acceptor.

The protein belongs to the Maf family. It depends on a divalent metal cation as a cofactor.

It is found in the cytoplasm. It catalyses the reaction a ribonucleoside 5'-triphosphate + H2O = a ribonucleoside 5'-phosphate + diphosphate + H(+). It carries out the reaction a 2'-deoxyribonucleoside 5'-triphosphate + H2O = a 2'-deoxyribonucleoside 5'-phosphate + diphosphate + H(+). Functionally, nucleoside triphosphate pyrophosphatase. May have a dual role in cell division arrest and in preventing the incorporation of modified nucleotides into cellular nucleic acids. This is Nucleoside triphosphate pyrophosphatase from Mycobacterium sp. (strain JLS).